The chain runs to 130 residues: Small ribosomal subunit protein uS9 (130 aa).

Belongs to the universal ribosomal protein uS9 family.

The protein is Small ribosomal subunit protein uS9 of Verminephrobacter eiseniae (strain EF01-2).